The sequence spans 220 residues: Endonuclease NucS (220 aa).

It belongs to the NucS endonuclease family.

The protein resides in the cytoplasm. Functionally, cleaves both 3' and 5' ssDNA extremities of branched DNA structures. The protein is Endonuclease NucS of Mycobacterium leprae (strain TN).